The following is a 24-amino-acid chain: Large ribosomal subunit protein uL10 (24 aa).

Belongs to the universal ribosomal protein uL10 family. Part of the ribosomal stalk of the 50S ribosomal subunit. The N-terminus interacts with L11 and the large rRNA to form the base of the stalk. The C-terminus forms an elongated spine to which L12 dimers bind in a sequential fashion forming a multimeric L10(L12)X complex.

Forms part of the ribosomal stalk, playing a central role in the interaction of the ribosome with GTP-bound translation factors. This Enterobacter cloacae protein is Large ribosomal subunit protein uL10 (rplJ).